Reading from the N-terminus, the 159-residue chain is uncharacterized protein (159 aa).

This sequence to M.jannaschii MJECL20.

This is an uncharacterized protein from Methanocaldococcus jannaschii (strain ATCC 43067 / DSM 2661 / JAL-1 / JCM 10045 / NBRC 100440) (Methanococcus jannaschii).